We begin with the raw amino-acid sequence, 301 residues long: Protoheme IX farnesyltransferase 2 (301 aa).

9 helical membrane-spanning segments follow: residues 29–49 (VVALMLLTVLVGMCLAVPTAV), 51–71 (VQPLIAGMFGIALMAGSAAAL), 101–121 (ALIFAASIGGLGFVVLYVLVN), 123–143 (LTAWLTFASLIGYALVYTAYL), 150–170 (NIVIGGLAGAMPPLLGWTAVT), 177–197 (ALLLVIIIFTWTPPHFWALAI), 223–243 (CILLYTVLLAIACLLPVLVGM), 244–264 (CGPMYFVCSSLLSSVFIYKAW), and 281–301 (FSIYHLMLLFMALLIDHYLWS).

This sequence belongs to the UbiA prenyltransferase family. Protoheme IX farnesyltransferase subfamily.

The protein resides in the cell inner membrane. The enzyme catalyses heme b + (2E,6E)-farnesyl diphosphate + H2O = Fe(II)-heme o + diphosphate. Its pathway is porphyrin-containing compound metabolism; heme O biosynthesis; heme O from protoheme: step 1/1. In terms of biological role, converts heme B (protoheme IX) to heme O by substitution of the vinyl group on carbon 2 of heme B porphyrin ring with a hydroxyethyl farnesyl side group. The polypeptide is Protoheme IX farnesyltransferase 2 (Shewanella sp. (strain W3-18-1)).